We begin with the raw amino-acid sequence, 320 residues long: Ferrochelatase (320 aa).

Positions 194 and 275 each coordinate Fe cation.

This sequence belongs to the ferrochelatase family. As to quaternary structure, monomer.

The protein localises to the cytoplasm. The catalysed reaction is heme b + 2 H(+) = protoporphyrin IX + Fe(2+). Its pathway is porphyrin-containing compound metabolism; protoheme biosynthesis; protoheme from protoporphyrin-IX: step 1/1. Catalyzes the ferrous insertion into protoporphyrin IX. The sequence is that of Ferrochelatase from Escherichia coli (strain K12 / MC4100 / BW2952).